The following is a 25-amino-acid chain: uncharacterized protein (25 aa).

It is found in the plastid. Its subcellular location is the chloroplast. This is an uncharacterized protein from Trieres chinensis (Marine centric diatom).